A 71-amino-acid chain; its full sequence is SRY-related protein LG28 (71 aa).

The HMG box DNA-binding region spans 1-68 (VKRPMNAFMV…KHMADYPDYK (68 aa)).

It is found in the nucleus. The chain is SRY-related protein LG28 from Eublepharis macularius (Leopard gecko).